Reading from the N-terminus, the 230-residue chain is Large ribosomal subunit protein uL1 (230 aa).

This sequence belongs to the universal ribosomal protein uL1 family. In terms of assembly, part of the 50S ribosomal subunit.

Functionally, binds directly to 23S rRNA. The L1 stalk is quite mobile in the ribosome, and is involved in E site tRNA release. In terms of biological role, protein L1 is also a translational repressor protein, it controls the translation of the L11 operon by binding to its mRNA. The protein is Large ribosomal subunit protein uL1 of Sulfurimonas denitrificans (strain ATCC 33889 / DSM 1251) (Thiomicrospira denitrificans (strain ATCC 33889 / DSM 1251)).